The following is a 353-amino-acid chain: MYYLSDLSHYAFFTYISVRAGFAFFIALCLSLFLMPKFITWAKNKNASQPIYEYAPETHKTKCHTPTMGGLIFISSAVIASLSCIKFDNIFAISALLCLILFCLIGLIDDLGKVLKKDNHSGLSPRMKLLTQIIAGLICILPLYFSSELSTELFIPFYKHPLFDMEIFAIAFWILVLISSSNAVNLTDGLDGLATVPSIFSLSTLGIFLYLSGNLNYSEYLLLPKIQGLGEVVIICAALIGALMGFLWYNCYPAQVFMGDSGSLALGGFIGFLAIISKNEILLLLIGFVFVLETVSVILQVGSFKIFNKRVFKMAPIHHHFEKVGWVENKIIVRFWMIALLSNLLALASIKLR.

Transmembrane regions (helical) follow at residues 22–42 (FAFFIALCLSLFLMPKFITWA), 65–85 (TPTMGGLIFISSAVIASLSCI), 88–108 (DNIFAISALLCLILFCLIGLI), 129–149 (LLTQIIAGLICILPLYFSSEL), 161–181 (PLFDMEIFAIAFWILVLISSS), 192–212 (GLATVPSIFSLSTLGIFLYLS), 228–248 (GLGEVVIICAALIGALMGFLW), 256–276 (VFMGDSGSLALGGFIGFLAII), 281–301 (ILLLLIGFVFVLETVSVILQV), and 330–350 (KIIVRFWMIALLSNLLALASI).

The protein belongs to the glycosyltransferase 4 family. MraY subfamily. Mg(2+) is required as a cofactor.

The protein localises to the cell inner membrane. It carries out the reaction UDP-N-acetyl-alpha-D-muramoyl-L-alanyl-gamma-D-glutamyl-meso-2,6-diaminopimeloyl-D-alanyl-D-alanine + di-trans,octa-cis-undecaprenyl phosphate = di-trans,octa-cis-undecaprenyl diphospho-N-acetyl-alpha-D-muramoyl-L-alanyl-D-glutamyl-meso-2,6-diaminopimeloyl-D-alanyl-D-alanine + UMP. The protein operates within cell wall biogenesis; peptidoglycan biosynthesis. Catalyzes the initial step of the lipid cycle reactions in the biosynthesis of the cell wall peptidoglycan: transfers peptidoglycan precursor phospho-MurNAc-pentapeptide from UDP-MurNAc-pentapeptide onto the lipid carrier undecaprenyl phosphate, yielding undecaprenyl-pyrophosphoryl-MurNAc-pentapeptide, known as lipid I. In Campylobacter jejuni subsp. jejuni serotype O:23/36 (strain 81-176), this protein is Phospho-N-acetylmuramoyl-pentapeptide-transferase.